Here is a 307-residue protein sequence, read N- to C-terminus: Probable E3 SUMO-protein ligase RNF212 (307 aa).

Residues 7–46 (CNRCFQSPHRKSSFSLTSCGHVYCHSCLLKGTKNECVICQ) form an RING-type zinc finger. The stretch at 91-124 (RRRLVAFYQEKISQLEESLRKSVLQIKQLQSMRS) forms a coiled coil. Residues 164-291 (LTPPARKPEM…KMSPFLPSTP (128 aa)) are disordered. Polar residues-rich tracts occupy residues 202–213 (LSLTPSHASMTK), 233–252 (SQLS…SSWT), and 259–271 (ISIS…QCAG).

In terms of tissue distribution, specifically expressed in meiocytes of the gonads.

It is found in the nucleus. It localises to the chromosome. The protein operates within protein modification; protein sumoylation. Its function is as follows. SUMO E3 ligase that acts as a regulator of crossing-over during meiosis: required to couple chromosome synapsis to the formation of crossover-specific recombination complexes. Localizes to recombination sites and stabilizes meiosis-specific recombination factors, such as MutS-gamma complex proteins (MSH4 and MSH5) and TEX11. May mediate sumoylation of target proteins MSH4 and/or MSH5, leading to enhance their binding to recombination sites. Acts as a limiting factor for crossover designation and/or reinforcement and plays an antagonist role with CCNB1IP1/HEI10 in the regulation of meiotic recombination. The sequence is that of Probable E3 SUMO-protein ligase RNF212 (Rnf212) from Mus musculus (Mouse).